The chain runs to 396 residues: MLNDLDSIHQTDEGLREYLRSRGNRSLYRYRLTLESPQAPRITVSGREYLAFCSNDYLGLANHPELIAALCEGATQYGVGAGTSHLVSGHSRAHHLLEEALASFTRFPRALLFSTGYMANAGVVTALTGRGDAVFGDKLNHASLNDAALLSRARLSRYPHLDLATLERQLAASPARRKLVISDAVFSMDGDIAPLPELLELCERYDAWLLLDDAHGFGVLGNQGRGSLAHFNISSPRIIYMGTLGKAAGVFGAFVAAQEEIIETLIQCARSYIYTTATPPFLSHALLKSLELIAGGAGRREKLAQLTKLLKQECHPLRWQLLPSDTPIQPLVMGENAEALQVSEALRQKGILVTAIRPPTVPEGTARLRISLSSSHDIEDVMELGAALREIDRDME.

A substrate-binding site is contributed by Arg29. Residue 116–117 (GY) participates in pyridoxal 5'-phosphate binding. A substrate-binding site is contributed by His141. Ser187, His215, and Thr243 together coordinate pyridoxal 5'-phosphate. Position 246 is an N6-(pyridoxal phosphate)lysine (Lys246). Thr360 contacts substrate.

Belongs to the class-II pyridoxal-phosphate-dependent aminotransferase family. BioF subfamily. Homodimer. Pyridoxal 5'-phosphate is required as a cofactor.

The catalysed reaction is 6-carboxyhexanoyl-[ACP] + L-alanine + H(+) = (8S)-8-amino-7-oxononanoate + holo-[ACP] + CO2. It functions in the pathway cofactor biosynthesis; biotin biosynthesis. Catalyzes the decarboxylative condensation of pimeloyl-[acyl-carrier protein] and L-alanine to produce 8-amino-7-oxononanoate (AON), [acyl-carrier protein], and carbon dioxide. The sequence is that of 8-amino-7-oxononanoate synthase from Nitrosospira multiformis (strain ATCC 25196 / NCIMB 11849 / C 71).